We begin with the raw amino-acid sequence, 432 residues long: Adenosine 3'-phospho 5'-phosphosulfate transporter 1 (432 aa).

A run of 9 helical transmembrane segments spans residues 5 to 25, 40 to 60, 109 to 129, 154 to 174, 238 to 258, 265 to 285, 299 to 319, 353 to 373, and 387 to 407; these read WWAV…ETPE, VVNA…VQYF, ALKL…WGVL, FLVL…CVLC, WEYL…LSSG, PATT…DSFT, SVQM…GSLL, LFIF…IMTL, and GHTV…ALLL. Position 427 is a phosphoserine (Ser427).

It belongs to the nucleotide-sugar transporter family. SLC35B subfamily.

The protein localises to the golgi apparatus membrane. It catalyses the reaction 3'-phosphoadenylyl sulfate(in) + adenosine 3',5'-bisphosphate(out) = 3'-phosphoadenylyl sulfate(out) + adenosine 3',5'-bisphosphate(in). Probably functions as a 3'-phosphoadenylyl sulfate:adenosine 3',5'-bisphosphate antiporter at the Golgi membranes. Mediates the transport from the cytosol into the lumen of the Golgi of 3'-phosphoadenylyl sulfate/adenosine 3'-phospho 5'-phosphosulfate (PAPS), a universal sulfuryl donor for sulfation events that take place in that compartment. The sequence is that of Adenosine 3'-phospho 5'-phosphosulfate transporter 1 from Pongo abelii (Sumatran orangutan).